We begin with the raw amino-acid sequence, 396 residues long: Acetate kinase (396 aa).

Asn-8 is a binding site for Mg(2+). Lys-15 is an ATP binding site. A substrate-binding site is contributed by Arg-89. Asp-146 functions as the Proton donor/acceptor in the catalytic mechanism. Residues 206–210 (HIGNG), 283–285 (DMR), and 331–335 (GVGEN) contribute to the ATP site. Glu-383 provides a ligand contact to Mg(2+).

Belongs to the acetokinase family. In terms of assembly, homodimer. Requires Mg(2+) as cofactor. It depends on Mn(2+) as a cofactor.

It is found in the cytoplasm. The enzyme catalyses acetate + ATP = acetyl phosphate + ADP. It functions in the pathway metabolic intermediate biosynthesis; acetyl-CoA biosynthesis; acetyl-CoA from acetate: step 1/2. Its function is as follows. Catalyzes the formation of acetyl phosphate from acetate and ATP. Can also catalyze the reverse reaction. The protein is Acetate kinase of Streptococcus pneumoniae (strain JJA).